The primary structure comprises 246 residues: Acetoacetate decarboxylase (246 aa).

The Schiff-base intermediate with acetoacetate role is filled by Lys116.

The protein belongs to the ADC family.

The catalysed reaction is acetoacetate + H(+) = acetone + CO2. Catalyzes the conversion of acetoacetate to acetone and carbon dioxide. The sequence is that of Acetoacetate decarboxylase from Burkholderia cenocepacia (strain ATCC BAA-245 / DSM 16553 / LMG 16656 / NCTC 13227 / J2315 / CF5610) (Burkholderia cepacia (strain J2315)).